The sequence spans 224 residues: MARYLVLAVALLLAACSSTQKKPLADDPFYAPVYPEAPPTKIAATGSIYQDSQASSLYSDIRAHKVGDIITIVLKESTQAKKSAGNQIKKGSDMSLDPIFAGGSNVSIGGVPIDLRYKDSMNTKRESDADQSNSLDGSISANVMQVLNNGSLVIRGEKWISINNGDEFIRVTGLVRSQDIKPDNTIDSTRMANARIQYSGTGTFADAQKVGWLSQFFMSDWWPF.

An N-terminal signal peptide occupies residues 1-15 (MARYLVLAVALLLAA). Cys16 carries the N-palmitoyl cysteine lipid modification. A lipid anchor (S-diacylglycerol cysteine) is attached at Cys16.

This sequence belongs to the FlgH family. As to quaternary structure, the basal body constitutes a major portion of the flagellar organelle and consists of four rings (L,P,S, and M) mounted on a central rod.

The protein localises to the cell outer membrane. It is found in the bacterial flagellum basal body. Functionally, assembles around the rod to form the L-ring and probably protects the motor/basal body from shearing forces during rotation. The chain is Flagellar L-ring protein from Shewanella baltica (strain OS223).